We begin with the raw amino-acid sequence, 225 residues long: Peptidyl-tRNA hydrolase (225 aa).

Y14 lines the tRNA pocket. The active-site Proton acceptor is H19. Residues F64, N66, and N112 each coordinate tRNA. Residues 182 to 225 form a disordered region; it reads AVALRMQPPKPEKPKPAAKAPEAQAPEAAPDERSALQKLADRFR. Residues 198 to 209 show a composition bias toward low complexity; sequence AAKAPEAQAPEA. Residues 211–225 show a composition bias toward basic and acidic residues; sequence PDERSALQKLADRFR.

Belongs to the PTH family. As to quaternary structure, monomer.

The protein resides in the cytoplasm. It carries out the reaction an N-acyl-L-alpha-aminoacyl-tRNA + H2O = an N-acyl-L-amino acid + a tRNA + H(+). Its function is as follows. Hydrolyzes ribosome-free peptidyl-tRNAs (with 1 or more amino acids incorporated), which drop off the ribosome during protein synthesis, or as a result of ribosome stalling. Functionally, catalyzes the release of premature peptidyl moieties from peptidyl-tRNA molecules trapped in stalled 50S ribosomal subunits, and thus maintains levels of free tRNAs and 50S ribosomes. In Cereibacter sphaeroides (strain ATCC 17029 / ATH 2.4.9) (Rhodobacter sphaeroides), this protein is Peptidyl-tRNA hydrolase.